The sequence spans 90 residues: Cell division topological specificity factor (90 aa).

This sequence belongs to the MinE family.

Its function is as follows. Prevents the cell division inhibition by proteins MinC and MinD at internal division sites while permitting inhibition at polar sites. This ensures cell division at the proper site by restricting the formation of a division septum at the midpoint of the long axis of the cell. The chain is Cell division topological specificity factor from Lachnoclostridium phytofermentans (strain ATCC 700394 / DSM 18823 / ISDg) (Clostridium phytofermentans).